Consider the following 352-residue polypeptide: MRKIIHVDMDCFFAAVEMRDDPRLRDIPLAIGGSKERRGVISTANYPARRYGVRSAMPTAMAFKLCPQLTLLPGRMAAYKEASQHIREIFARYTPLIEPLSLDEAYLDVSDSLACGGSATLIAQEIRQSIASELNLTASAGIAPIKFLAKIASELNKPNGQYVITPNQIQPFLQDLPLSKIPGVGAVTAKRLQALGLVTCGEIQKYPLAELLKHFGKFGRVLWERSHGIDEREISPDRLRKSVGVEKTLAEDIYDWESCEALIEELYLELETRLRKVKPDLHIARQGVKLKFHDFQQTTQEHTWPVLNKADLLQIAHAAWNERRAERGVRLVGLHVTLLDPQLERQLLLDWG.

The UmuC domain maps to 4 to 185 (IIHVDMDCFF…LPLSKIPGVG (182 aa)). The Mg(2+) site is built by aspartate 8 and aspartate 103. Residue glutamate 104 is part of the active site.

Belongs to the DNA polymerase type-Y family. Monomer. Mg(2+) serves as cofactor.

It localises to the cytoplasm. It carries out the reaction DNA(n) + a 2'-deoxyribonucleoside 5'-triphosphate = DNA(n+1) + diphosphate. In terms of biological role, poorly processive, error-prone DNA polymerase involved in untargeted mutagenesis. Copies undamaged DNA at stalled replication forks, which arise in vivo from mismatched or misaligned primer ends. These misaligned primers can be extended by PolIV. Exhibits no 3'-5' exonuclease (proofreading) activity. May be involved in translesional synthesis, in conjunction with the beta clamp from PolIII. This chain is DNA polymerase IV, found in Yersinia pseudotuberculosis serotype O:1b (strain IP 31758).